Consider the following 347-residue polypeptide: UDP-3-O-acylglucosamine N-acyltransferase (347 aa).

H245 functions as the Proton acceptor in the catalytic mechanism.

Belongs to the transferase hexapeptide repeat family. LpxD subfamily. As to quaternary structure, homotrimer.

It catalyses the reaction a UDP-3-O-[(3R)-3-hydroxyacyl]-alpha-D-glucosamine + a (3R)-hydroxyacyl-[ACP] = a UDP-2-N,3-O-bis[(3R)-3-hydroxyacyl]-alpha-D-glucosamine + holo-[ACP] + H(+). It functions in the pathway bacterial outer membrane biogenesis; LPS lipid A biosynthesis. Its function is as follows. Catalyzes the N-acylation of UDP-3-O-acylglucosamine using 3-hydroxyacyl-ACP as the acyl donor. Is involved in the biosynthesis of lipid A, a phosphorylated glycolipid that anchors the lipopolysaccharide to the outer membrane of the cell. In Chromohalobacter salexigens (strain ATCC BAA-138 / DSM 3043 / CIP 106854 / NCIMB 13768 / 1H11), this protein is UDP-3-O-acylglucosamine N-acyltransferase.